Consider the following 1329-residue polypeptide: Putative protein tag-53 (1329 aa).

Residues 65–92 enclose the EGF-like 1 domain; the sequence is SCDKPCYNGVCLNKACVCSKGWYGSQCD. Disulfide bonds link C66-C75, C70-C80, C82-C91, C94-C120, and C144-C166. One can recognise a CUB domain in the interval 94–203; sequence CFGRIRISDN…NGFNVSYESN (110 aa). A glycan (N-linked (GlcNAc...) asparagine) is linked at N103. 2 N-linked (GlcNAc...) asparagine glycosylation sites follow: N197 and N208. EGF-like domains are found at residues 204–232 and 235–270; these read RCAY…LNCE and VCQL…ETCQ. 6 disulfide bridges follow: C205–C215, C209–C220, C222–C231, C236–C252, C247–C257, and C259–C269. Kelch repeat units lie at residues 302–353, 355–408, 416–463, 471–518, 520–575, and 577–619; these read VVWS…KYKN, LYMF…VAGH, EMFV…AVEY, AILV…YLNG, MVVV…VIGQ, and LYAL…KCVF. N324, N395, N447, N481, N529, and N555 each carry an N-linked (GlcNAc...) asparagine glycan. N820 is a glycosylation site (N-linked (GlcNAc...) asparagine). A glycan (N-linked (GlcNAc...) asparagine; atypical) is linked at N832. Residues N833 and N934 are each glycosylated (N-linked (GlcNAc...) asparagine). 8 disulfide bridges follow: C945–C953, C947–C968, C971–C980, C983–C997, C1000–C1009, C1002–C1016, C1018–C1028, and C1031–C1045. Laminin EGF-like domains follow at residues 945–999 and 1000–1047; these read CQCN…VCSP and CDCH…PCFY. Residues 952 to 998 enclose the EGF-like 4 domain; it reads TCFTSVGSFPPVTIEKCQSCQNHTTGAHCERCAPGFYGDARNGGVCS. A glycan (N-linked (GlcNAc...) asparagine) is linked at N973. N1066, N1102, and N1147 each carry an N-linked (GlcNAc...) asparagine glycan. A helical transmembrane segment spans residues 1176-1196; it reads VLFFVIFAACFIVLLVVAGLL. The Cytoplasmic segment spans residues 1197 to 1329; that stretch reads WMIKVRIEAY…TIRQRPNNND (133 aa).

It localises to the membrane. The chain is Putative protein tag-53 (tag-53) from Caenorhabditis elegans.